Here is a 601-residue protein sequence, read N- to C-terminus: Sestrin homolog (601 aa).

Over residues M1–Q11 the composition is skewed to polar residues. A disordered region spans residues M1–N58. An N-linked (GlcNAc...) asparagine glycan is attached at N20. Over residues S21–S32 the composition is skewed to low complexity. N322 and N330 each carry an N-linked (GlcNAc...) asparagine glycan. Positions R355–S425 are disordered. Residues L368 to G379 are compositionally biased toward basic and acidic residues. Positions D380–S425 are enriched in low complexity. N-linked (GlcNAc...) asparagine glycosylation is found at N387, N388, N406, N438, and N499.

This sequence belongs to the sestrin family.

The protein localises to the nucleus. Its subcellular location is the cytoplasm. Functionally, may function as a negative feedback regulator of TOR function. The protein is Sestrin homolog of Dictyostelium discoideum (Social amoeba).